Here is a 464-residue protein sequence, read N- to C-terminus: Soluble pyridine nucleotide transhydrogenase (464 aa).

FAD is bound at residue 35-44; sequence DDRPQVGGNC.

It belongs to the class-I pyridine nucleotide-disulfide oxidoreductase family. The cofactor is FAD.

The protein localises to the cytoplasm. The enzyme catalyses NAD(+) + NADPH = NADH + NADP(+). Functionally, conversion of NADPH, generated by peripheral catabolic pathways, to NADH, which can enter the respiratory chain for energy generation. In Azotobacter vinelandii (strain DJ / ATCC BAA-1303), this protein is Soluble pyridine nucleotide transhydrogenase.